The chain runs to 316 residues: GTPase Era (316 aa).

Residues 9–190 (RAGFAAIIGA…TAKLVSMMPE (182 aa)) form the Era-type G domain. Residues 17–24 (GAPNAGKS) form a G1 region. Position 17 to 24 (17 to 24 (GAPNAGKS)) interacts with GTP. The tract at residues 43–47 (QTTRF) is G2. The tract at residues 64 to 67 (DTPG) is G3. Residues 64–68 (DTPGI) and 140–143 (NKID) contribute to the GTP site. Positions 140–143 (NKID) are G4. The G5 stretch occupies residues 169–171 (ISA). A KH type-2 domain is found at 221-298 (VHEELPYAAT…HLFLHVKVKE (78 aa)).

The protein belongs to the TRAFAC class TrmE-Era-EngA-EngB-Septin-like GTPase superfamily. Era GTPase family. Monomer.

The protein resides in the cytoplasm. It is found in the cell inner membrane. Functionally, an essential GTPase that binds both GDP and GTP, with rapid nucleotide exchange. Plays a role in 16S rRNA processing and 30S ribosomal subunit biogenesis and possibly also in cell cycle regulation and energy metabolism. This is GTPase Era from Caulobacter vibrioides (strain ATCC 19089 / CIP 103742 / CB 15) (Caulobacter crescentus).